Here is a 239-residue protein sequence, read N- to C-terminus: Adapter protein MecA (239 aa).

The segment covering 118–128 (EQRTKEKEAQG) has biased composition (basic and acidic residues). A disordered region spans residues 118–137 (EQRTKEKEAQGSKRQKSSAR).

Belongs to the MecA family. In terms of assembly, homodimer.

Functionally, enables the recognition and targeting of unfolded and aggregated proteins to the ClpC protease or to other proteins involved in proteolysis. The chain is Adapter protein MecA from Staphylococcus aureus (strain COL).